Here is a 261-residue protein sequence, read N- to C-terminus: Thioesterase frbD (261 aa).

It belongs to the AMT4 thioesterase family.

The protein operates within antifungal biosynthesis. Functionally, thioesterase; part of the gene cluster that mediates the biosynthesis of the antifungal antibiotic FR901469, an inhibitor of beta-1,3-glucansynthase, exerting antifungal activity against the pathogenes Candida albicans and Aspergillus fumigatus. FR901469 is a cyclic depsipeptide containing 12 amino acid residues and a fatty acid chain. The NRPS frbI contains 12 modules responsible for the formation of the depsipeptide backbone which is denoted as Acyl-Thr-Ala-Tyr-Val-4OHPro-Thr-Thr-3OHPro-threo3OHGln-Gly-Thr-Orn-OH (C71H116N14O23). The PKS frbB is probably involved in the production of the hydrocarbon chain, and the acyl-CoA ligase frbC might be involved in the transport of the chain to the peptide ptoduct of frbI. Because FR901469 contains 3 hydroxylated amino acid residues, the 3 oxygenases frbA, frbH, and frbJ might be participating in amino acid hydroxylation. As no thioesterase domains were detected in frbI or frbB, the thioesterases frbD and frbE may instead release and cyclize the products of the NRPS and PKS, respectively. This chain is Thioesterase frbD, found in Dothideomycetidae sp. (strain 11243) (Fungal sp. (strain No.11243)).